The primary structure comprises 386 residues: DNA-directed RNA polymerase subunit Rpo1C (386 aa).

This sequence belongs to the RNA polymerase beta' chain family. In terms of assembly, part of the RNA polymerase complex.

The protein resides in the cytoplasm. The enzyme catalyses RNA(n) + a ribonucleoside 5'-triphosphate = RNA(n+1) + diphosphate. In terms of biological role, DNA-dependent RNA polymerase (RNAP) catalyzes the transcription of DNA into RNA using the four ribonucleoside triphosphates as substrates. Forms part of the jaw domain. The sequence is that of DNA-directed RNA polymerase subunit Rpo1C from Methanococcus maripaludis (strain C5 / ATCC BAA-1333).